Reading from the N-terminus, the 243-residue chain is Probable transcriptional regulatory protein BB_0025 (243 aa).

Belongs to the TACO1 family.

It is found in the cytoplasm. This Borreliella burgdorferi (strain ATCC 35210 / DSM 4680 / CIP 102532 / B31) (Borrelia burgdorferi) protein is Probable transcriptional regulatory protein BB_0025.